A 124-amino-acid polypeptide reads, in one-letter code: Fluoride-specific ion channel FluC (124 aa).

4 helical membrane passes run 6–26, 37–57, 69–89, and 92–112; these read LLIG…SGIV, LAVN…SLFA, TGFC…FVLV, and GLLF…LIMV. Na(+) contacts are provided by Gly73 and Thr76.

The protein belongs to the fluoride channel Fluc/FEX (TC 1.A.43) family.

Its subcellular location is the cell membrane. It catalyses the reaction fluoride(in) = fluoride(out). Its activity is regulated as follows. Na(+) is not transported, but it plays an essential structural role and its presence is essential for fluoride channel function. In terms of biological role, fluoride-specific ion channel. Important for reducing fluoride concentration in the cell, thus reducing its toxicity. The protein is Fluoride-specific ion channel FluC of Methanocaldococcus jannaschii (strain ATCC 43067 / DSM 2661 / JAL-1 / JCM 10045 / NBRC 100440) (Methanococcus jannaschii).